Here is a 326-residue protein sequence, read N- to C-terminus: Ribosomal RNA small subunit methyltransferase H (326 aa).

S-adenosyl-L-methionine contacts are provided by residues 45–47 (GGH), Asp65, Asp113, and Gln120. A disordered region spans residues 299–326 (PSAEEITRNPRSRSARLRAAERIAHDGR). Over residues 316 to 326 (RAAERIAHDGR) the composition is skewed to basic and acidic residues.

This sequence belongs to the methyltransferase superfamily. RsmH family.

It localises to the cytoplasm. It catalyses the reaction cytidine(1402) in 16S rRNA + S-adenosyl-L-methionine = N(4)-methylcytidine(1402) in 16S rRNA + S-adenosyl-L-homocysteine + H(+). Functionally, specifically methylates the N4 position of cytidine in position 1402 (C1402) of 16S rRNA. The sequence is that of Ribosomal RNA small subunit methyltransferase H from Thermomicrobium roseum (strain ATCC 27502 / DSM 5159 / P-2).